We begin with the raw amino-acid sequence, 118 residues long: Large ribosomal subunit protein bL20 (118 aa).

This sequence belongs to the bacterial ribosomal protein bL20 family.

Binds directly to 23S ribosomal RNA and is necessary for the in vitro assembly process of the 50S ribosomal subunit. It is not involved in the protein synthesizing functions of that subunit. This Desulfotalea psychrophila (strain LSv54 / DSM 12343) protein is Large ribosomal subunit protein bL20.